Here is a 939-residue protein sequence, read N- to C-terminus: cGMP-dependent 3',5'-cyclic phosphodiesterase (939 aa).

Glycine 2 carries N-myristoyl glycine lipidation. Residues cysteine 5 and cysteine 11 are each lipidated (S-palmitoyl cysteine). The tract at residues 16–38 (YPAARPAEPRGQQVFLKPDEPPP) is disordered. Phosphoserine is present on serine 116. The tract at residues 197–217 (PEAVQNTSVDASEDQKDEKGY) is disordered. GAF domains follow at residues 236-373 (ATSL…HYTG) and 408-547 (DVSV…GISI). 3',5'-cyclic GMP-binding residues include serine 430, aspartate 445, isoleucine 464, tyrosine 487, and threonine 498. A PDEase domain is found at 577–901 (SDDEYTKLLH…EHWTKVSHKF (325 aa)). Histidine 655 acts as the Proton donor in catalysis. Residues histidine 659, histidine 695, aspartate 696, and aspartate 807 each coordinate Zn(2+). Position 696 (aspartate 696) interacts with Mg(2+).

Belongs to the cyclic nucleotide phosphodiesterase family. PDE2 subfamily. In terms of assembly, homodimer. The cofactor is Zn(2+). Mg(2+) is required as a cofactor. Expressed in brain and liver (at protein level).

The protein resides in the cytoplasm. It localises to the mitochondrion matrix. The protein localises to the mitochondrion inner membrane. It is found in the mitochondrion outer membrane. Its subcellular location is the cell membrane. The catalysed reaction is a nucleoside 3',5'-cyclic phosphate + H2O = a nucleoside 5'-phosphate + H(+). The enzyme catalyses 3',5'-cyclic GMP + H2O = GMP + H(+). It catalyses the reaction 3',5'-cyclic AMP + H2O = AMP + H(+). The 3',5'-cyclic-AMP phosphodiesterase activity is stimulated by 3',5'-cyclic GMP. Specifically inhibited by Bay 60-7550. Its function is as follows. cGMP-activated cyclic nucleotide phosphodiesterase with a dual-specificity for the second messengers cAMP and cGMP, which are key regulators of many important physiological processes. Has a higher efficiency with cGMP compared to cAMP. Plays a role in cell growth and migration. Functionally, regulates mitochondrial cAMP levels and respiration. Involved in the regulation of mitochondria morphology/dynamics and apoptotic cell death via local modulation of cAMP/PKA signaling in the mitochondrion, including the monitoring of local cAMP levels at the outer mitochondrial membrane and of PKA-dependent phosphorylation of DNM1L. The chain is cGMP-dependent 3',5'-cyclic phosphodiesterase from Mus musculus (Mouse).